A 324-amino-acid polypeptide reads, in one-letter code: Holliday junction branch migration complex subunit RuvB (324 aa).

The interval 1-168 is large ATPase domain (RuvB-L); that stretch reads MEDLALRPKT…FGIVEHLEYY (168 aa). Residues Tyr14, Ile15, Gly48, Lys51, Thr52, Thr53, Asp97, Thr146, Tyr168, and Arg205 each coordinate ATP. A Mg(2+)-binding site is contributed by Thr52. The small ATPAse domain (RuvB-S) stretch occupies residues 169 to 239; that stretch reads TPEELAQGVM…RALEALAALG (71 aa). The segment at 242–324 is head domain (RuvB-H); that stretch reads ELGLEKRDRE…PPPVGPLLEP (83 aa). 2 residues coordinate DNA: Arg297 and Arg302.

The protein belongs to the RuvB family. In terms of assembly, homohexamer. Forms a complex with RuvA. Electron microscopic images suggest 2 closely interacting RuvA tetramers sandwich the HJ DNA; each tetramer associates with an RuvB hexamer. Forms 2 complexes with Holliday junction (HJ) DNA which probably have 1 and 2 RuvA tetramers per complex (called complex I and complex II). Forms an RuvA(8)-RuvB(12)-Holliday junction (HJ) complex. HJ DNA is sandwiched between 2 RuvA tetramers; dsDNA enters through RuvA and exits via RuvB. An RuvB hexamer assembles on each DNA strand where it exits the tetramer. Each RuvB hexamer is contacted by two RuvA subunits (via domain III) on 2 adjacent RuvB subunits; this complex drives branch migration. In the full resolvosome a probable DNA-RuvA(4)-RuvB(12)-RuvC(2) complex forms which resolves the HJ. It depends on Mg(2+) as a cofactor.

Its subcellular location is the cytoplasm. The enzyme catalyses ATP + H2O = ADP + phosphate + H(+). The activity of RuvB is enhanced by E.coli RuvA. Its function is as follows. The RuvA-RuvB-RuvC complex processes Holliday junction (HJ) DNA during genetic recombination and DNA repair, while the RuvA-RuvB complex plays an important role in the rescue of blocked DNA replication forks via replication fork reversal (RFR). RuvA specifically binds to HJ cruciform DNA, conferring on it an open structure. The RuvB hexamer acts as an ATP-dependent pump, pulling dsDNA into and through the RuvAB complex. RuvB forms 2 homohexamers on either side of HJ DNA bound by 1 or 2 RuvA tetramers; 4 subunits per hexamer contact DNA at a time. Coordinated motions by a converter formed by DNA-disengaged RuvB subunits stimulates ATP hydrolysis and nucleotide exchange. Immobilization of the converter enables RuvB to convert the ATP-contained energy into a lever motion, pulling 2 nucleotides of DNA out of the RuvA tetramer per ATP hydrolyzed, thus driving DNA branch migration. The RuvB motors rotate together with the DNA substrate, which together with the progressing nucleotide cycle form the mechanistic basis for DNA recombination by continuous HJ branch migration. Branch migration allows RuvC to scan DNA until it finds its consensus sequence, where it cleaves and resolves cruciform DNA. RuvB is a Mg(2+)-dependent, DNA-dependent ATPase with an equal preference for supercoiled and linear dsDNA; all (d)NTPs tested were efficiently hydrolyzed. Promotes Holliday junction (HJ) dissociation at 60 degrees Celsius in the presence of ATP but not ATP-gamma-S or ADP; (d)ATP, (d)CTP and dTTP also power dissociation in the absence of any RuvA. RuvA stimulates the ATPase of RuvB in the presence of dsDNA and HJ branch migration by RuvB. Excess RuvB stimulates some branch migration in vitro even in the presence of mutant RuvA. The protein is Holliday junction branch migration complex subunit RuvB of Thermus thermophilus (strain ATCC 27634 / DSM 579 / HB8).